Here is a 277-residue protein sequence, read N- to C-terminus: 4-hydroxy-3-prenylphenylpyruvate oxygenase/4-hydroxy-3-prenylbenzoate synthase (277 aa).

This sequence belongs to the aldolase class II family. Homotetramer. It depends on Fe(2+) as a cofactor.

The enzyme catalyses 3-dimethylallyl-4-hydroxyphenylpyruvate + O2 = 3-dimethylallyl-4-hydroxymandelate + CO2. The catalysed reaction is 3-dimethylallyl-4-hydroxymandelate + O2 = 3-dimethylallyl-4-hydroxybenzoate + CO2 + H2O. It participates in antibiotic biosynthesis. Its activity is regulated as follows. Activated by ascorbate. Functionally, involved in the biosynthesis of ring A of the aminocoumarin antibiotic clorobiocin. Catalyzes two consecutive oxidative decarboxylations of 3-dimethylallyl-4-hydroxyphenylpyruvate (3DMA-4HPP) to yield 3-dimethylallyl-4-hydroxybenzoate (3DMA-4HB) via the 3-dimethylallyl-4-hydroxymandelic acid (3DMA-4HMA) intermediate. The sequence is that of 4-hydroxy-3-prenylphenylpyruvate oxygenase/4-hydroxy-3-prenylbenzoate synthase from Streptomyces roseochromogenus subsp. oscitans.